The following is a 160-amino-acid chain: F-box protein At1g15015 (160 aa).

The 44-residue stretch at 1-44 folds into the F-box domain; the sequence is MDVTLPHHVVEDILERLPVKTLRKFKCVCSTWRSTIDSQRFKDR.

The chain is F-box protein At1g15015 from Arabidopsis thaliana (Mouse-ear cress).